A 400-amino-acid polypeptide reads, in one-letter code: MKILVINCGSSSLKYQLIESKDGNVLAKGLAERIGINDSLLTHNANGEKIKIKKDMKDHKDAIKLVLDALVNSDYGVIKDMSEIDAVGHRVVHGGEYFTSSVLITDDVLKAITDCIELAPLHNPANIEGIKACKQIMPDVPMVAVFDTAFHQTMPDYAYLYPIPYEYYTKYKIRKYGFHGTSHKYVSQRAAEILNKPIESLKIITCHLGNGSSIAAVKNGKSIDTSMGFTPLEGLAMGTRSGSIDPSIISYLMEKENISAEEVVNILNKKSGVYGISGISSDFRDLEDAAFKNGDKRAQLALNVFAYRVKKTIGSYAAAMGGVDVIVFTAGIGENGPEIREFILDGLEFLGFKLDKEKNKVRGEEAIISTADSKVNVMVVPTNEEYMIAKDTEKIVESLK.

Asn7 is a binding site for Mg(2+). Lys14 contributes to the ATP binding site. Residue Arg90 coordinates substrate. Asp147 serves as the catalytic Proton donor/acceptor. ATP-binding positions include 207 to 211 (HLGNG), 282 to 284 (DFR), and 331 to 335 (GIGEN). Position 384 (Glu384) interacts with Mg(2+).

Belongs to the acetokinase family. In terms of assembly, homodimer. The cofactor is Mg(2+). Mn(2+) serves as cofactor.

It localises to the cytoplasm. The catalysed reaction is acetate + ATP = acetyl phosphate + ADP. It participates in metabolic intermediate biosynthesis; acetyl-CoA biosynthesis; acetyl-CoA from acetate: step 1/2. Its function is as follows. Catalyzes the formation of acetyl phosphate from acetate and ATP. Can also catalyze the reverse reaction. The sequence is that of Acetate kinase from Thermoanaerobacterium thermosaccharolyticum (strain ATCC 7956 / DSM 571 / NCIMB 9385 / NCA 3814 / NCTC 13789 / WDCM 00135 / 2032) (Clostridium thermosaccharolyticum).